The sequence spans 69 residues: Small archaeal modifier protein 2 (69 aa).

Lys55 participates in a covalent cross-link: Glycyl lysine isopeptide (Lys-Gly) (interchain with G-Cter in SAMP2). Position 69 is a 1-thioglycine; alternate (Gly69). Gly69 bears the Glycyl adenylate; alternate mark. A Glycyl lysine isopeptide (Gly-Lys) (interchain with K-? in acceptor proteins); alternate cross-link involves residue Gly69.

The C-terminal glycine is likely acyl-adenylated (-COAMP) by UbaA, and also probably thiocarboxylated (-COSH) to function in sulfur transfer.

Functions as a protein modifier covalently attached to lysine residues of substrate proteins, as well as a sulfur carrier in tRNA thiolation. The protein modification process is termed sampylation and involves the formation of an isopeptide bond between the SAMP2 C-terminal glycine carboxylate and the epsilon-amino group of lysine residues on target proteins. Is able to form polymeric chains with itself likely at Lys-55, similar to ubiquitin and other ubiquitin-like proteins. May serve as a proteolytic signal in the cell to target proteins for degradation by proteasomes. In Pyrococcus furiosus (strain ATCC 43587 / DSM 3638 / JCM 8422 / Vc1), this protein is Small archaeal modifier protein 2.